The primary structure comprises 125 residues: Large ribosomal subunit protein bL17 (125 aa).

The protein belongs to the bacterial ribosomal protein bL17 family. In terms of assembly, part of the 50S ribosomal subunit. Contacts protein L32.

The chain is Large ribosomal subunit protein bL17 from Acinetobacter baumannii (strain AB307-0294).